The primary structure comprises 1700 residues: A-kinase anchor protein SPHKAP (1700 aa).

Disordered regions lie at residues 364-385, 742-778, and 793-885; these read SNLN…QDGE, IRRR…SNSH, and SKQD…NTQE. Low complexity predominate over residues 768 to 778; it reads SSSSSPLSNSH. Over residues 822-831 the composition is skewed to polar residues; that stretch reads DSSTATTSSK. The span at 839-855 shows a compositional bias: basic and acidic residues; the sequence is AGEDTKSPHHSENECRA. Polar residues predominate over residues 857–873; the sequence is SEGQRSPTVSQSRSGSQ. The segment at 929-946 is PKA-RII subunit binding domain; the sequence is FAEELADTVVSMATEIAA. Residues 980–1006 form a disordered region; that stretch reads KRKKESQGSGTAVRKHKPPRLSEIKRK. Phosphoserine is present on residues Ser-1025, Ser-1085, Ser-1107, Ser-1120, Ser-1121, Ser-1124, Ser-1259, and Ser-1288. 3 disordered regions span residues 1374–1414, 1481–1535, and 1585–1604; these read DSVT…PVPI, IHSD…DTSS, and GQSE…TASP. The segment covering 1383 to 1398 has biased composition (polar residues); it reads PVSSLSKTASLTNHSP. A compositionally biased stretch (polar residues) spans 1586–1604; the sequence is QSESTEAPASGPPTGTASP.

The protein belongs to the AKAP110 family. In terms of assembly, interacts (via the PKA-RII subunit binding domain) with the RI subunit of PKA. Interacts with SPHK1; the interaction greatly reduces SPHK1 activity. Highly expressed in heart. Both isoforms abundantly expressed in ventricle. Also expressed in spleen, ovary and brain.

The protein resides in the cytoplasm. In terms of biological role, anchoring protein that binds preferentially to the type I regulatory subunit of c-AMP-dependent protein kinase (PKA type I) and targets it to distinct subcellular compartments. May act as a converging factor linking cAMP and sphingosine signaling pathways. Plays a regulatory role in the modulation of SPHK1. This Homo sapiens (Human) protein is A-kinase anchor protein SPHKAP (SPHKAP).